The primary structure comprises 311 residues: Phosphopantothenate--cysteine ligase (311 aa).

Ala-2 carries the post-translational modification N-acetylalanine.

It belongs to the PPC synthetase family. As to quaternary structure, homodimer.

It carries out the reaction (R)-4'-phosphopantothenate + L-cysteine + ATP = N-[(R)-4-phosphopantothenoyl]-L-cysteine + AMP + diphosphate + H(+). The enzyme catalyses (R)-4'-phosphopantothenate + L-cysteine + CTP = N-[(R)-4-phosphopantothenoyl]-L-cysteine + CMP + diphosphate + H(+). Its pathway is cofactor biosynthesis; coenzyme A biosynthesis; CoA from (R)-pantothenate: step 2/5. Catalyzes the second step in the biosynthesis of coenzyme A from vitamin B5, where cysteine is conjugated to 4'-phosphopantothenate to form 4-phosphopantothenoylcysteine. Has a preference for ATP over CTP as a cosubstrate. The polypeptide is Phosphopantothenate--cysteine ligase (Ppcs) (Mus musculus (Mouse)).